Consider the following 363-residue polypeptide: 3-isopropylmalate dehydrogenase (363 aa).

Residue 76-89 (GPKWDTLPGHLRPE) participates in NAD(+) binding. Substrate contacts are provided by Arg-96, Arg-106, Arg-134, and Asp-223. 3 residues coordinate Mg(2+): Asp-223, Asp-247, and Asp-251. 281-293 (GSAPDIAGKGVAN) is an NAD(+) binding site.

It belongs to the isocitrate and isopropylmalate dehydrogenases family. LeuB type 1 subfamily. In terms of assembly, homodimer. It depends on Mg(2+) as a cofactor. The cofactor is Mn(2+).

It localises to the cytoplasm. It carries out the reaction (2R,3S)-3-isopropylmalate + NAD(+) = 4-methyl-2-oxopentanoate + CO2 + NADH. Its pathway is amino-acid biosynthesis; L-leucine biosynthesis; L-leucine from 3-methyl-2-oxobutanoate: step 3/4. Catalyzes the oxidation of 3-carboxy-2-hydroxy-4-methylpentanoate (3-isopropylmalate) to 3-carboxy-4-methyl-2-oxopentanoate. The product decarboxylates to 4-methyl-2 oxopentanoate. The protein is 3-isopropylmalate dehydrogenase of Halalkalibacterium halodurans (strain ATCC BAA-125 / DSM 18197 / FERM 7344 / JCM 9153 / C-125) (Bacillus halodurans).